Here is a 419-residue protein sequence, read N- to C-terminus: UDP-N-acetylglucosamine 1-carboxyvinyltransferase (419 aa).

Residue 22–23 coordinates phosphoenolpyruvate; sequence KN. Position 95 (R95) interacts with UDP-N-acetyl-alpha-D-glucosamine. Catalysis depends on C119, which acts as the Proton donor. C119 is modified (2-(S-cysteinyl)pyruvic acid O-phosphothioketal). The UDP-N-acetyl-alpha-D-glucosamine site is built by D308 and I330.

It belongs to the EPSP synthase family. MurA subfamily.

Its subcellular location is the cytoplasm. It catalyses the reaction phosphoenolpyruvate + UDP-N-acetyl-alpha-D-glucosamine = UDP-N-acetyl-3-O-(1-carboxyvinyl)-alpha-D-glucosamine + phosphate. The protein operates within cell wall biogenesis; peptidoglycan biosynthesis. Its function is as follows. Cell wall formation. Adds enolpyruvyl to UDP-N-acetylglucosamine. The protein is UDP-N-acetylglucosamine 1-carboxyvinyltransferase of Rickettsia bellii (strain OSU 85-389).